Reading from the N-terminus, the 195-residue chain is Cell division protein SepF (195 aa).

Residues 32-54 (RYSKTNSSETLAPEEEEPIRNRR) are disordered.

The protein belongs to the SepF family. Homodimer. Interacts with FtsZ.

The protein localises to the cytoplasm. In terms of biological role, cell division protein that is part of the divisome complex and is recruited early to the Z-ring. Probably stimulates Z-ring formation, perhaps through the cross-linking of FtsZ protofilaments. Its function overlaps with FtsA. The protein is Cell division protein SepF of Gloeothece citriformis (strain PCC 7424) (Cyanothece sp. (strain PCC 7424)).